The following is a 53-amino-acid chain: Bowman-Birk type proteinase inhibitor II-4 (53 aa).

4 cysteine pairs are disulfide-bonded: Cys-8–Cys-23, Cys-13–Cys-21, Cys-30–Cys-37, and Cys-34–Cys-49.

The protein belongs to the Bowman-Birk serine protease inhibitor family.

The protein is Bowman-Birk type proteinase inhibitor II-4 of Triticum aestivum (Wheat).